The primary structure comprises 381 residues: MKLKIGITCYPSVGGSGVVGTELGKQLAERGHEIHFITSGLPFRLNKVYPNIYFHEVTVNQYSVFQYPPYDLALASKMAEVAQRENLDILHVHYAIPHAICAYLAKQMIGERIKIVTTLHGTDITVLGSDPSLNNLIRFGIEQSDVVTAVSHSLINETHELVKPNKDIQTVYNFIDERVYFKRDMTQLKKEYGISESEKILIHISNFRKVKRVQDVVQAFAKIVTEVDAKLLLVGDGPEFCTILQLVKNLHIEDRVLFLGKQDNVAELLAMSDLMLLLSEKESFGLVLLEAMACGVPCIGTRVGGIPEVIQHGDTGYLCEVGDTTGVADQAIQLLKDEELHRNMGERARESVYEQFRSEKIVSQYETIYYDVLRDDKNGKI.

Ser16, Tyr94, and Thr122 together coordinate (S)-malate. UDP contacts are provided by Asn206, Gln262, and Glu290.

The protein belongs to the glycosyltransferase group 1 family. Glycosyltransferase 4 subfamily. In terms of assembly, dimer of tetramers.

It catalyses the reaction (S)-malate + UDP-N-acetyl-alpha-D-glucosamine = (S)-malyl N-acetyl-alpha-D-glucosaminide + UDP + H(+). Involved in bacillithiol (BSH) biosynthesis. Catalyzes the first step of the pathway, the formation of N-acetylglucosaminylmalate (GlcNAc-Mal) from UDP-N-acetylglucosamine (UDP-GlcNAc) and L-malate. The polypeptide is N-acetyl-alpha-D-glucosaminyl L-malate synthase (Bacillus anthracis).